The sequence spans 422 residues: UDP-N-acetylglucosamine 1-carboxyvinyltransferase (422 aa).

Residue 22–23 coordinates phosphoenolpyruvate; sequence KN. Residue R93 coordinates UDP-N-acetyl-alpha-D-glucosamine. The active-site Proton donor is the C117. A 2-(S-cysteinyl)pyruvic acid O-phosphothioketal modification is found at C117. Residues 122–126, D308, and I330 contribute to the UDP-N-acetyl-alpha-D-glucosamine site; that span reads RPVDL.

The protein belongs to the EPSP synthase family. MurA subfamily.

It is found in the cytoplasm. The catalysed reaction is phosphoenolpyruvate + UDP-N-acetyl-alpha-D-glucosamine = UDP-N-acetyl-3-O-(1-carboxyvinyl)-alpha-D-glucosamine + phosphate. Its pathway is cell wall biogenesis; peptidoglycan biosynthesis. Functionally, cell wall formation. Adds enolpyruvyl to UDP-N-acetylglucosamine. The polypeptide is UDP-N-acetylglucosamine 1-carboxyvinyltransferase (Legionella pneumophila (strain Paris)).